Reading from the N-terminus, the 943-residue chain is Nuclear factor of activated T-cells, cytoplasmic 1 (943 aa).

The segment at 22 to 48 (GRGETLGPAPRAGGTMKSAEEEHYGYA) is disordered. The calcineurin-binding stretch occupies residues 118 to 123 (PRIEIT). The interval 126 to 218 (LGLYHNNNQF…CVSPKTTDPE (93 aa)) is transactivation domain A (TAD-A). The disordered stretch occupies residues 200 to 298 (PQTSPWQSPC…GSPRVSVTDD (99 aa)). Polar residues predominate over residues 201–214 (QTSPWQSPCVSPKT). Tandem repeats lie at residues 203–219 (SPWQSPCVSPKTTDPEE) and 233–249 (SPRHSPSTSPRASVTEE). Residues 203–298 (SPWQSPCVSP…GSPRVSVTDD (96 aa)) are 3 X SP repeats. 2 positions are modified to phosphoserine: S233 and S237. Polar residues predominate over residues 236–248 (HSPSTSPRASVTE). S245 is modified (phosphoserine; by PKA). Positions 265-267 (KRK) match the Nuclear localization signal motif. S269 carries the phosphoserine; by PKA modification. Residues 276-288 (PYSPHHSPTPSPH) show a composition bias toward pro residues. The stretch at 282 to 298 (SPTPSPHGSPRVSVTDD) is repeat 3. At S294 the chain carries Phosphoserine; by PKA. The Nuclear export signal motif lies at 310-321 (SAIVAAINALTT). The RHD domain occupies 410–592 (PTLPALDWQL…NPIECSQRSA (183 aa)). The DNA-binding element occupies 439–446 (RAHYETEG). The short motif at 682–684 (KRK) is the Nuclear localization signal element. The tract at residues 703-943 (TEPTDDYEPA…NDLSSTSTHS (241 aa)) is transactivation domain B (TAD-B). Residues 787–912 (HLGLPQPAGE…SPNLAPIPVT (126 aa)) form a disordered region. Over residues 846–855 (SPSPPLPPAT) the composition is skewed to pro residues. Positions 924–933 (YLDDVNEIIR) match the Nuclear export signal motif.

Member of the multicomponent NFATC transcription complex that consists of at least two components, a pre-existing cytoplasmic component NFATC2 and an inducible nuclear component NFATC1. Other members such as NFATC4, NFATC3 or members of the activating protein-1 family, MAF, GATA4 and Cbp/p300 can also bind the complex. NFATC proteins bind to DNA as monomers. Interacts with HOMER2 and HOMER3; this interaction may compete with calcineurin/PPP3CA-binding and hence prevent NFATC1 dephosphorylation and activation. Interacts with TLE6/GRG6. Post-translationally, phosphorylated by NFATC-kinase and GSK3B; phosphorylation induces NFATC1 nuclear exit and dephosphorylation by calcineurin promotes nuclear import. Phosphorylation by PKA and DYRK2 negatively modulates nuclear accumulation, and promotes subsequent phosphorylation by GSK3B or casein kinase 1. In terms of tissue distribution, expressed in thymus, peripheral leukocytes as T-cells and spleen. Isoforms A are preferentially expressed in effector T-cells (thymus and peripheral leukocytes) whereas isoforms B and isoforms C are preferentially expressed in naive T-cells (spleen). Isoforms B are expressed in naive T-cells after first antigen exposure and isoforms A are expressed in effector T-cells after second antigen exposure. Isoforms IA are widely expressed but not detected in liver nor pancreas, neural expression is strongest in corpus callosum. Isoforms IB are expressed mostly in muscle, cerebellum, placenta and thymus, neural expression in fetal and adult brain, strongest in corpus callosum.

It is found in the cytoplasm. The protein resides in the nucleus. Its function is as follows. Plays a role in the inducible expression of cytokine genes in T-cells, especially in the induction of the IL-2 or IL-4 gene transcription. Also controls gene expression in embryonic cardiac cells. Could regulate not only the activation and proliferation but also the differentiation and programmed death of T-lymphocytes as well as lymphoid and non-lymphoid cells. Required for osteoclastogenesis and regulates many genes important for osteoclast differentiation and function. This chain is Nuclear factor of activated T-cells, cytoplasmic 1 (NFATC1), found in Homo sapiens (Human).